We begin with the raw amino-acid sequence, 336 residues long: MIEFVIPKKLKVEEEREERDYYYSRFSLSPLERGYAITIGNALRRVLLSSIPSLAIVGVRFIKPEKYHEYDYIEGVKEDILDIILNLKKVQFRINVTVKGTIKMEVEKKGPGELVAGDIKTPAGIEVVNPDLHIATLNSKADLFFEVYAEVGKGFVPVSEREERPDVGWIPIDGVFSPVIKVNFLTENVRVGKRTDYDKLILEIWTKKSIRPEEALRKAADILINHFKIVTEGLPELKISEEYIITSEEEEAEVPASEHEEEHRENSDVYNRKIDELELSVRSLNCLKRAKIETIGDLLSKTEEELLKIKNFGQKSLDEVKEKLKEKFGLELRKGE.

The alpha N-terminal domain (alpha-NTD) stretch occupies residues 1 to 235 (MIEFVIPKKL…HFKIVTEGLP (235 aa)). The interval 264-336 (RENSDVYNRK…KFGLELRKGE (73 aa)) is alpha C-terminal domain (alpha-CTD).

Belongs to the RNA polymerase alpha chain family. As to quaternary structure, homodimer. The RNAP catalytic core consists of 2 alpha, 1 beta, 1 beta' and 1 omega subunit. When a sigma factor is associated with the core the holoenzyme is formed, which can initiate transcription.

The catalysed reaction is RNA(n) + a ribonucleoside 5'-triphosphate = RNA(n+1) + diphosphate. DNA-dependent RNA polymerase catalyzes the transcription of DNA into RNA using the four ribonucleoside triphosphates as substrates. This Thermotoga maritima (strain ATCC 43589 / DSM 3109 / JCM 10099 / NBRC 100826 / MSB8) protein is DNA-directed RNA polymerase subunit alpha.